A 102-amino-acid chain; its full sequence is Redox- and pH-responsive transcriptional regulator WhiB3 (102 aa).

In terms of domain architecture, 4Fe-4S Wbl-type spans 22-86 (LCRGMDSSMF…GGLSESERDL (65 aa)). Cys23, Cys53, Cys56, and Cys62 together coordinate [4Fe-4S] cluster.

This sequence belongs to the WhiB family. As to quaternary structure, homodimer. Interacts with the C-terminal 54 residues of sigma factor SigA (RpoV). [4Fe-4S] cluster is required as a cofactor. The 4Fe-4S cluster interacts with NO, forming a protein-bound dinitrosyliron dithiol complex. Post-translationally, the 4Fe-4S cluster interacts with O(2), leading to its degradation. Cluster loss takes about 2 hours. Once in the apo-form the cysteines oxidize to form 2 intramolecular disulfide bonds.

The protein resides in the cytoplasm. In terms of biological role, a redox-sensitive transcriptional regulator. Maintains intracellular redox homeostasis by regulating catabolic metabolism and polyketide biosynthesis. Regulates expression of the redox buffer ergothioneine (ERG) in a carbon-source-dependent manner; loss of ERG or mycothiol (MSH, the other major redox buffer in this bacteria) leads to respiratory alterations and bioenergetic deficiencies that negatively impact virulence. In response to low external pH (like that found in host macrophage phagosomes) alters endogenous gene expression leading to acid resistance; MSH and WhiB3 are probably part of a regulatory circuit that mediates gene expression upon acid stress. Regulates pathogenic lipid synthesis, coordinating proprionate flux (and other host-derived fatty acid oxidation intermediates) into methyl-branched fatty acids (polyacyltrehalose, phthiocerol dimycocerosates, sulfolipids) and the storage lipid triacylglycerol, functioning as reductive sink. During intracellular growth M.tuberculosis uses host fatty acids as an energy source, generating large quantities of proprionate and NADH/NADPH, which are toxic and highly reducing respectively. WhiB3 is thought to help dissipate proprionate and NADH/NADPH by switching to the in vivo carbon source and via lipid anabolism. Responds to NO and O(2). Regulates expression of genes encoding modular polyketide synthases such as pks2, pks3 and fbpA. The oxidized apo-form of WhiB3 binds DNA (with 2 intramolecular disulfide bonds); holo-WhiB3 (with the 4Fe-4S cluster) binds DNA considerably less well. Discriminates poorly between specific and non-specific DNA-binding. Plays a role in virulence and nutritional stress. In its apo-form can act as a protein disulfide reductase. Its function is as follows. May respond to mycothiol (MSH) redox potential (E-MSH) which decreases at pH 4.5 for up to 72 hours, indicative of cellular reductive stress; deletion of whiB3 leads to a lesser E-MSH at 72 hours, indicative of cellular oxidative stress. Probably via its effects on production of polyketide lipids, regulates host gene expression, leading to blockage of phagosome maturation. Equilibration of extra- and intracytoplasmic pH kills bacteria. This chain is Redox- and pH-responsive transcriptional regulator WhiB3 (whiB3), found in Mycobacterium tuberculosis (strain ATCC 25618 / H37Rv).